A 317-amino-acid chain; its full sequence is Transaldolase (317 aa).

K126 acts as the Schiff-base intermediate with substrate in catalysis.

The protein belongs to the transaldolase family. Type 1 subfamily. Homodimer.

Its subcellular location is the cytoplasm. It carries out the reaction D-sedoheptulose 7-phosphate + D-glyceraldehyde 3-phosphate = D-erythrose 4-phosphate + beta-D-fructose 6-phosphate. It functions in the pathway carbohydrate degradation; pentose phosphate pathway; D-glyceraldehyde 3-phosphate and beta-D-fructose 6-phosphate from D-ribose 5-phosphate and D-xylulose 5-phosphate (non-oxidative stage): step 2/3. Its function is as follows. Transaldolase is important for the balance of metabolites in the pentose-phosphate pathway. This Burkholderia mallei (strain SAVP1) protein is Transaldolase.